We begin with the raw amino-acid sequence, 129 residues long: Small ribosomal subunit protein uS11 (129 aa).

Belongs to the universal ribosomal protein uS11 family. In terms of assembly, part of the 30S ribosomal subunit. Interacts with proteins S7 and S18. Binds to IF-3.

In terms of biological role, located on the platform of the 30S subunit, it bridges several disparate RNA helices of the 16S rRNA. Forms part of the Shine-Dalgarno cleft in the 70S ribosome. The polypeptide is Small ribosomal subunit protein uS11 (Serratia proteamaculans (strain 568)).